A 160-amino-acid polypeptide reads, in one-letter code: Eosinophil cationic protein (160 aa).

The signal sequence occupies residues 1–27; it reads MVPKLFTSQICLLLLLGLMGVEGSLHA. Positions 28 to 72 are required for nearly all of the bactericidal activities; partially involved in LPS-binding; sequence RPPQFTRAQWFAIQHISLNPPRCTIAMRVINNYRWRCKNQNTFLR. Catalysis depends on histidine 42, which acts as the Proton acceptor. Disulfide bonds link cysteine 50-cysteine 110, cysteine 64-cysteine 123, cysteine 82-cysteine 138, and cysteine 89-cysteine 98. The residue at position 60 (tyrosine 60) is a 3'-nitrotyrosine. 65 to 69 lines the substrate pocket; that stretch reads KNQNT. 3 N-linked (GlcNAc...) asparagine glycosylation sites follow: asparagine 84, asparagine 92, and asparagine 119. Histidine 155 functions as the Proton donor in the catalytic mechanism.

It belongs to the pancreatic ribonuclease family. As to quaternary structure, interacts with bacterial lipopolysaccharide (LPS) and lipoteichoic acid (LTA). In vitro interacts with phospholipid bilayers.

The protein localises to the secreted. Functionally, cytotoxin and helminthotoxin with low-efficiency ribonuclease activity. Possesses a wide variety of biological activities. Exhibits antibacterial activity. This Gorilla gorilla gorilla (Western lowland gorilla) protein is Eosinophil cationic protein (RNASE3).